Consider the following 430-residue polypeptide: Aspartate aminotransferase, mitochondrial (430 aa).

The transit peptide at 1 to 29 (MALLHSGRVLSGMAAAFHPGLAAAASARA) directs the protein to the mitochondrion. Threonine 48 is modified (phosphothreonine). Lysine 59 is modified (N6-acetyllysine). Glycine 65 is a binding site for substrate. Lysine 73 bears the N6-acetyllysine; alternate mark. N6-succinyllysine; alternate is present on lysine 73. At lysine 82 the chain carries N6-acetyllysine. Lysine 90 bears the N6-acetyllysine; alternate mark. An N6-succinyllysine; alternate modification is found at lysine 90. Tyrosine 96 is modified (3'-nitrotyrosine; alternate). Tyrosine 96 carries the phosphotyrosine; alternate modification. N6-acetyllysine; alternate occurs at positions 107 and 122. N6-succinyllysine; alternate occurs at positions 107 and 122. Serine 143 is modified (phosphoserine). Lysine 159 bears the N6-acetyllysine; alternate mark. Lysine 159 carries the N6-succinyllysine; alternate modification. Tryptophan 162 lines the substrate pocket. Lysine 185 is modified (N6-acetyllysine; alternate). N6-succinyllysine; alternate is present on lysine 185. A substrate-binding site is contributed by asparagine 215. Lysine 227 carries the post-translational modification N6-succinyllysine. Lysine 234 is modified (N6-acetyllysine). N6-acetyllysine; alternate is present on residues lysine 279 and lysine 296. At lysine 279 the chain carries N6-(pyridoxal phosphate)lysine; alternate. Lysine 296 carries the post-translational modification N6-succinyllysine; alternate. The residue at position 302 (lysine 302) is an N6-acetyllysine. Lysine 309 is modified (N6-acetyllysine; alternate). Position 309 is an N6-succinyllysine; alternate (lysine 309). The residue at position 313 (arginine 313) is an Asymmetric dimethylarginine. Lysine 338 is modified (N6-acetyllysine; alternate). Lysine 338 is modified (N6-succinyllysine; alternate). Position 345 is an N6-acetyllysine (lysine 345). Residue lysine 363 is modified to N6-acetyllysine; alternate. Lysine 363 carries the N6-succinyllysine; alternate modification. N6-acetyllysine is present on residues lysine 364 and lysine 387. N6-acetyllysine; alternate occurs at positions 396 and 404. N6-succinyllysine; alternate is present on residues lysine 396 and lysine 404. Position 407 (arginine 407) interacts with substrate.

It belongs to the class-I pyridoxal-phosphate-dependent aminotransferase family. In terms of assembly, homodimer. It depends on pyridoxal 5'-phosphate as a cofactor. As to expression, expressed in all tissues tested: liver, pancreas, kidney, heart, spleen, arterioles, and lymphocytes.

It is found in the mitochondrion matrix. The protein localises to the cell membrane. It catalyses the reaction L-aspartate + 2-oxoglutarate = oxaloacetate + L-glutamate. The enzyme catalyses L-kynurenine + 2-oxoglutarate = kynurenate + L-glutamate + H2O. Catalyzes the irreversible transamination of the L-tryptophan metabolite L-kynurenine to form kynurenic acid (KA). As a member of the malate-aspartate shuttle, it has a key role in the intracellular NAD(H) redox balance. Is important for metabolite exchange between mitochondria and cytosol, and for amino acid metabolism. Facilitates cellular uptake of long-chain free fatty acids. This is Aspartate aminotransferase, mitochondrial (Got2) from Rattus norvegicus (Rat).